The primary structure comprises 246 residues: Pyridoxine 5'-phosphate synthase (246 aa).

N12 lines the 3-amino-2-oxopropyl phosphate pocket. Residue 14-15 (DH) coordinates 1-deoxy-D-xylulose 5-phosphate. R23 provides a ligand contact to 3-amino-2-oxopropyl phosphate. H48 acts as the Proton acceptor in catalysis. Positions 50 and 55 each coordinate 1-deoxy-D-xylulose 5-phosphate. The active-site Proton acceptor is E75. T105 provides a ligand contact to 1-deoxy-D-xylulose 5-phosphate. The active-site Proton donor is the H196. Residues G197 and 218-219 (GH) each bind 3-amino-2-oxopropyl phosphate.

This sequence belongs to the PNP synthase family. In terms of assembly, homooctamer; tetramer of dimers.

It is found in the cytoplasm. It carries out the reaction 3-amino-2-oxopropyl phosphate + 1-deoxy-D-xylulose 5-phosphate = pyridoxine 5'-phosphate + phosphate + 2 H2O + H(+). It participates in cofactor biosynthesis; pyridoxine 5'-phosphate biosynthesis; pyridoxine 5'-phosphate from D-erythrose 4-phosphate: step 5/5. Functionally, catalyzes the complicated ring closure reaction between the two acyclic compounds 1-deoxy-D-xylulose-5-phosphate (DXP) and 3-amino-2-oxopropyl phosphate (1-amino-acetone-3-phosphate or AAP) to form pyridoxine 5'-phosphate (PNP) and inorganic phosphate. This is Pyridoxine 5'-phosphate synthase from Pseudomonas putida (strain GB-1).